We begin with the raw amino-acid sequence, 456 residues long: Acid sphingomyelinase-like phosphodiesterase 3b (456 aa).

A signal peptide spans 1–18 (MTLLGWLIFLAPWGVAGA). Positions 28 and 30 each coordinate Zn(2+). Asn34 carries an N-linked (GlcNAc...) asparagine glycan. Cys45 and Cys64 are oxidised to a cystine. The N-linked (GlcNAc...) asparagine glycan is linked to Asn72. Asp93 contacts Zn(2+). An N-linked (GlcNAc...) asparagine glycan is attached at Asn100. Asn134 serves as a coordination point for Zn(2+). Asn164 and Asn223 each carry an N-linked (GlcNAc...) asparagine glycan. Zn(2+) contacts are provided by His236, His277, and His279. Intrachain disulfides connect Cys405–Cys409 and Cys415–Cys428.

The protein belongs to the acid sphingomyelinase family. Interacts with TLR4, TLR7, TLR8 and TLR9. Requires Zn(2+) as cofactor. In terms of processing, N-glycosylated. Macrophages and dendritic cells.

It is found in the secreted. The protein resides in the cell membrane. In terms of biological role, lipid-modulating phosphodiesterase. Active on the surface of macrophages and dendritic cells and strongly influences macrophage lipid composition and membrane fluidity. Acts as a negative regulator of Toll-like receptor signaling. Has in vitro phosphodiesterase activity, but the physiological substrate is unknown. Lacks activity with phosphocholine-containing lipids, but can cleave CDP-choline, and can release phosphate from ATP and ADP (in vitro). This Mus musculus (Mouse) protein is Acid sphingomyelinase-like phosphodiesterase 3b (Smpdl3b).